Consider the following 421-residue polypeptide: Serine--tRNA ligase (421 aa).

225–227 contacts L-serine; it reads TAE. ATP contacts are provided by residues 256–258 and V272; that span reads RSE. Residue E279 coordinates L-serine. 345–348 lines the ATP pocket; that stretch reads ETHS. L-serine is bound at residue T380.

The protein belongs to the class-II aminoacyl-tRNA synthetase family. Type-1 seryl-tRNA synthetase subfamily. In terms of assembly, homodimer. A single tRNA molecule binds across the dimer.

The protein localises to the cytoplasm. It carries out the reaction tRNA(Ser) + L-serine + ATP = L-seryl-tRNA(Ser) + AMP + diphosphate + H(+). The enzyme catalyses tRNA(Sec) + L-serine + ATP = L-seryl-tRNA(Sec) + AMP + diphosphate + H(+). It participates in aminoacyl-tRNA biosynthesis; selenocysteinyl-tRNA(Sec) biosynthesis; L-seryl-tRNA(Sec) from L-serine and tRNA(Sec): step 1/1. Catalyzes the attachment of serine to tRNA(Ser). Is also probably able to aminoacylate tRNA(Sec) with serine, to form the misacylated tRNA L-seryl-tRNA(Sec), which will be further converted into selenocysteinyl-tRNA(Sec). In Thermus thermophilus (strain ATCC BAA-163 / DSM 7039 / HB27), this protein is Serine--tRNA ligase (serS).